A 197-amino-acid polypeptide reads, in one-letter code: UPF0637 protein LEUM_0496 (197 aa).

Belongs to the UPF0637 family.

In Leuconostoc mesenteroides subsp. mesenteroides (strain ATCC 8293 / DSM 20343 / BCRC 11652 / CCM 1803 / JCM 6124 / NCDO 523 / NBRC 100496 / NCIMB 8023 / NCTC 12954 / NRRL B-1118 / 37Y), this protein is UPF0637 protein LEUM_0496.